We begin with the raw amino-acid sequence, 502 residues long: ATP synthase subunit alpha (502 aa).

The interval 115 to 136 is disordered; sequence VDGLGPIHTTKTRPIESPAPGV. ATP is bound at residue 169–176; it reads GDRQTGKT.

It belongs to the ATPase alpha/beta chains family. As to quaternary structure, F-type ATPases have 2 components, CF(1) - the catalytic core - and CF(0) - the membrane proton channel. CF(1) has five subunits: alpha(3), beta(3), gamma(1), delta(1), epsilon(1). CF(0) has three main subunits: a(1), b(2) and c(9-12). The alpha and beta chains form an alternating ring which encloses part of the gamma chain. CF(1) is attached to CF(0) by a central stalk formed by the gamma and epsilon chains, while a peripheral stalk is formed by the delta and b chains.

It localises to the cell membrane. It catalyses the reaction ATP + H2O + 4 H(+)(in) = ADP + phosphate + 5 H(+)(out). Produces ATP from ADP in the presence of a proton gradient across the membrane. The alpha chain is a regulatory subunit. This chain is ATP synthase subunit alpha, found in Bacillus cytotoxicus (strain DSM 22905 / CIP 110041 / 391-98 / NVH 391-98).